The chain runs to 80 residues: uncharacterized protein (80 aa).

The protein belongs to the BolA/IbaG family.

This is an uncharacterized protein from Buchnera aphidicola subsp. Schizaphis graminum (strain Sg).